We begin with the raw amino-acid sequence, 422 residues long: MRTSKASVTQTWLLYTQLCLWKDLIIRYVRQIIRRAKSMLFSQNMVADSAEISVIDVKSHLSVAKDPSNFQIAEIRIHDSICIDIPSSEETPLLESIKSCSATTIEEHVTEFVPNISSGSYADKGDYREYMEDEHICIDDLSDHLGSSFYRFPVPMAFYGVFDGHGGSDASQYIKENAMSLFFEDAVFRQSPSVVDSLFLKELETSHREAYRLADLAMEDERIVSSSCGTTALTALVIGRHLMVANVGDCRAVLCRKGKAVDMSFDHKSTFEPERRRVEDLGGYFEGEYLYGDLAVTRALGDWSIKRFSPLGESLSPLISDPDIQQMILTEEDEFLIMGCDGVWDVMTSQYAVTFVRQGLRRHGDPRRCAMELGREALRLDSSDNVTVVVICFSSSPAPQRRRIRFCVSDEARARLQTMLEG.

Residues 117–393 (SSGSYADKGD…DNVTVVVICF (277 aa)) form the PPM-type phosphatase domain. Residues Asp-163, Gly-164, Asp-341, and Asp-384 each contribute to the Mn(2+) site.

Belongs to the PP2C family. It depends on Mg(2+) as a cofactor. Mn(2+) is required as a cofactor.

The catalysed reaction is O-phospho-L-seryl-[protein] + H2O = L-seryl-[protein] + phosphate. It carries out the reaction O-phospho-L-threonyl-[protein] + H2O = L-threonyl-[protein] + phosphate. In Arabidopsis thaliana (Mouse-ear cress), this protein is Probable protein phosphatase 2C 43.